Reading from the N-terminus, the 732-residue chain is 1,4-alpha-glucan branching enzyme GlgB (732 aa).

Catalysis depends on aspartate 412, which acts as the Nucleophile. The active-site Proton donor is glutamate 465.

The protein belongs to the glycosyl hydrolase 13 family. GlgB subfamily. As to quaternary structure, monomer.

The enzyme catalyses Transfers a segment of a (1-&gt;4)-alpha-D-glucan chain to a primary hydroxy group in a similar glucan chain.. It participates in glycan biosynthesis; glycogen biosynthesis. Catalyzes the formation of the alpha-1,6-glucosidic linkages in glycogen by scission of a 1,4-alpha-linked oligosaccharide from growing alpha-1,4-glucan chains and the subsequent attachment of the oligosaccharide to the alpha-1,6 position. This chain is 1,4-alpha-glucan branching enzyme GlgB, found in Pseudomonas aeruginosa (strain ATCC 15692 / DSM 22644 / CIP 104116 / JCM 14847 / LMG 12228 / 1C / PRS 101 / PAO1).